Consider the following 205-residue polypeptide: Small ribosomal subunit protein uS3c (205 aa).

Residues 37–106 (IRQLLRDYVL…TWRISLVEVS (70 aa)) form the KH type-2 domain.

It belongs to the universal ribosomal protein uS3 family. In terms of assembly, part of the 30S ribosomal subunit.

The protein resides in the plastid. Its subcellular location is the chloroplast. The sequence is that of Small ribosomal subunit protein uS3c (rps3) from Cyanidioschyzon merolae (strain NIES-3377 / 10D) (Unicellular red alga).